Here is a 281-residue protein sequence, read N- to C-terminus: Probable endonuclease 4 (281 aa).

9 residues coordinate Zn(2+): H69, H109, E145, D179, H182, H216, D229, H231, and E261.

Belongs to the AP endonuclease 2 family. Zn(2+) is required as a cofactor.

The catalysed reaction is Endonucleolytic cleavage to 5'-phosphooligonucleotide end-products.. Endonuclease IV plays a role in DNA repair. It cleaves phosphodiester bonds at apurinic or apyrimidinic (AP) sites, generating a 3'-hydroxyl group and a 5'-terminal sugar phosphate. This Yersinia enterocolitica serotype O:8 / biotype 1B (strain NCTC 13174 / 8081) protein is Probable endonuclease 4.